We begin with the raw amino-acid sequence, 853 residues long: Cytochrome P450 monooxygenase mpaDE (853 aa).

Residues 1 to 6 (MKSLSL) lie on the Lumenal side of the membrane. A helical transmembrane segment spans residues 7–29 (TWITAVAVVLYLVQRYVRSYWRL). Residues 30 to 853 (KDIPGPVLAK…DIENSIEGQK (824 aa)) lie on the Cytoplasmic side of the membrane. Position 449 (Cys449) interacts with heme.

The protein belongs to the cytochrome P450 family. Requires heme as cofactor.

The protein localises to the endoplasmic reticulum membrane. It catalyses the reaction 5-methylorsellinate + reduced [NADPH--hemoprotein reductase] + O2 = 4,6-dihydroxy-2-(hydroxymethyl)-3-methylbenzoate + oxidized [NADPH--hemoprotein reductase] + H2O + H(+). The enzyme catalyses 4,6-dihydroxy-2-(hydroxymethyl)-3-methylbenzoate + H(+) = 5,7-dihydroxy-4-methylphthalide + H2O. It participates in secondary metabolite biosynthesis; terpenoid biosynthesis. Functionally, cytochrome P450 monooxygenase; part of the gene cluster that mediates the biosynthesis of mycophenolic acid (MPA), the first isolated antibiotic natural product in the world obtained from a culture of Penicillium brevicompactum in 1893. MpaDE is an endoplasmic reticulum-bound enzyme that catalyzes the conversion of 5-methylorsellinic acid (5MOA) into the phthalide compound 5,7-dihydroxy-4,6-dimethylphthalide (DHMP). MpaDE first catalyzes hydroxylation of 5-MOA to 4,6-dihydroxy-2-(hydroxymethyl)-3-methylbenzoic acid (DHMB), and then acts as a lactone synthase that catalyzes the ring closure to convert DHMB into DHMP. The first step of the pathway is the synthesis of 5-methylorsellinic acid (5MOA) by the cytosolic polyketide synthase mpaC. 5MOA is then converted to the phthalide compound 5,7-dihydroxy-4,6-dimethylphthalide (DHMP) by the endoplasmic reticulum-bound cytochrome P450 monooxygenase mpaDE. MpaDE first catalyzes hydroxylation of 5-MOA to 4,6-dihydroxy-2-(hydroxymethyl)-3-methylbenzoic acid (DHMB). MpaDE then acts as a lactone synthase that catalyzes the ring closure to convert DHMB into DHMP. The next step is the prenylation of DHMP by the Golgi apparatus-associated prenyltransferase mpaA to yield farnesyl-DHMP (FDHMP). The ER-bound oxygenase mpaB then mediates the oxidative cleavage the C19-C20 double bond in FDHMP to yield FDHMP-3C via a mycophenolic aldehyde intermediate. The O-methyltransferase mpaG catalyzes the methylation of FDHMP-3C to yield MFDHMP-3C. After the cytosolic methylation of FDHMP-3C, MFDHMP-3C enters into peroxisomes probably via free diffusion due to its low molecular weight. Upon a peroxisomal CoA ligation reaction, catalyzed by a beta-oxidation component enzyme acyl-CoA ligase ACL891, MFDHMP-3C-CoA would then be restricted to peroxisomes for the following beta-oxidation pathway steps. The peroxisomal beta-oxidation machinery than converts MFDHMP-3C-CoA into MPA_CoA, via a beta-oxidation chain-shortening process. Finally mpaH acts as a peroxisomal acyl-CoA hydrolase with high substrate specificity toward MPA-CoA to release the final product MPA. In Penicillium brevicompactum, this protein is Cytochrome P450 monooxygenase mpaDE.